Reading from the N-terminus, the 533-residue chain is Homeobox protein DTH-1 (533 aa).

Disordered regions lie at residues 1 to 28 (MSSN…NECP) and 308 to 378 (LPQN…GKKR). A compositionally biased stretch (basic and acidic residues) spans 8–19 (VKYDTNFDREGY). Positions 308-317 (LPQNLPNPNQ) are enriched in low complexity. The span at 318-333 (TDSIYSSSINENNQPI) shows a compositional bias: polar residues. A compositionally biased stretch (low complexity) spans 360–371 (SVENNDNENSSS). The homeobox DNA-binding region spans 377-436 (KRKRRVLFSKKQILELERHFRQKKYLSAPEREHLANLIGLSPTQVKIWFQNHRYKMKRAH).

This sequence belongs to the NK-2 homeobox family. In terms of tissue distribution, intestine and unidentified peripheral parenchymal cells. Slightly higher levels in the cephalic region compared to other body regions.

Its subcellular location is the nucleus. In terms of biological role, this protein might be involved in determination and/or differentiation of nerve cells in the continuous replacement of neurons in the cephalic region. This is Homeobox protein DTH-1 (DTH-1) from Girardia tigrina (Planarian).